Consider the following 228-residue polypeptide: MEEQKKLVSQYAIDHYIKSNMHLGIGTGTTVFYAIKYLSDKIKSGDLKNLKLYPTSSDTKYLLAKENITYESKFTKFSKNIDITIDGADEILLEKKALIKGGGAAHLMEKIIAYNSHQLLIIADETKIVQTLGEKVSVPIEIVPDALPFITANLEKMNFNPVLRTCKFKAGPIITDNNNYILDVKMNIENPKGAEKYFKLLPGILEIGIFNHQNTKVIYYQNGQIKEI.

Substrate-binding positions include 27–30 (TGTT), 86–89 (DGAD), and 100–103 (KGGG). The Proton acceptor role is filled by Glu-109. Lys-127 contributes to the substrate binding site.

This sequence belongs to the ribose 5-phosphate isomerase family. Homodimer.

It carries out the reaction aldehydo-D-ribose 5-phosphate = D-ribulose 5-phosphate. The protein operates within carbohydrate degradation; pentose phosphate pathway; D-ribose 5-phosphate from D-ribulose 5-phosphate (non-oxidative stage): step 1/1. Catalyzes the reversible conversion of ribose-5-phosphate to ribulose 5-phosphate. This chain is Ribose-5-phosphate isomerase A, found in Borrelia hermsii (strain HS1 / DAH).